Here is an 85-residue protein sequence, read N- to C-terminus: Putative transmembrane protein ORF85 (85 aa).

A run of 2 helical transmembrane segments spans residues 12–32 (FPPTTLIVLALGSAIAYKFLS) and 44–64 (LGIILVFLGHGGVISTIGAGI).

It is found in the host membrane. This chain is Putative transmembrane protein ORF85, found in Acidianus convivator (ABV).